Consider the following 431-residue polypeptide: Putative F-box/FBD/LRR-repeat protein At3g56780 (431 aa).

Positions 6–62 constitute an F-box domain; the sequence is CSCINELPDDLILKILSFVSTKHVVVTSLLSKKWKSLWTRVPILKYDVRDHTRFERF. LRR repeat units lie at residues 56-82, 88-113, 135-161, 162-187, 209-236, 237-262, 264-285, and 357-382; these read HTRF…HVEL, NKDI…EIDA, LKGI…HIDH, SSLF…MVIR, LEGL…HVAR, MEDF…TLEE, TSDV…SIIT, and CSER…KLEH. The FBD domain occupies 391–423; the sequence is RWEPPSLVPECLLSSLEALEWKGYTGRYGDKDL.

The sequence is that of Putative F-box/FBD/LRR-repeat protein At3g56780 from Arabidopsis thaliana (Mouse-ear cress).